Consider the following 104-residue polypeptide: Large ribosomal subunit protein uL23 (104 aa).

This sequence belongs to the universal ribosomal protein uL23 family. As to quaternary structure, part of the 50S ribosomal subunit. Contacts protein L29, and trigger factor when it is bound to the ribosome.

One of the early assembly proteins it binds 23S rRNA. One of the proteins that surrounds the polypeptide exit tunnel on the outside of the ribosome. Forms the main docking site for trigger factor binding to the ribosome. This chain is Large ribosomal subunit protein uL23, found in Burkholderia multivorans (strain ATCC 17616 / 249).